The chain runs to 421 residues: Methionine aminopeptidase 2 (421 aa).

The interval 1–53 (MTDAEIENSPASDLKELNLENEGVEQQDQAKADESDPVESKKKKNKKKKKKKS) is disordered. Basic and acidic residues predominate over residues 28–40 (DQAKADESDPVES). Position 35 is a phosphoserine (S35). Basic residues predominate over residues 41–53 (KKKKNKKKKKKKS). H174 is a substrate binding site. Positions 194, 205, and 274 each coordinate a divalent metal cation. Position 282 (H282) interacts with substrate. Positions 307 and 402 each coordinate a divalent metal cation.

Belongs to the peptidase M24A family. Methionine aminopeptidase eukaryotic type 2 subfamily. Requires Co(2+) as cofactor. The cofactor is Zn(2+). Mn(2+) serves as cofactor. It depends on Fe(2+) as a cofactor.

The protein resides in the cytoplasm. The catalysed reaction is Release of N-terminal amino acids, preferentially methionine, from peptides and arylamides.. In terms of biological role, cotranslationally removes the N-terminal methionine from nascent proteins. The N-terminal methionine is often cleaved when the second residue in the primary sequence is small and uncharged (Met-Ala-, Cys, Gly, Pro, Ser, Thr, or Val). This Saccharomyces cerevisiae (strain RM11-1a) (Baker's yeast) protein is Methionine aminopeptidase 2.